The following is a 701-amino-acid chain: Rab-like protein 6 (701 aa).

Met1 carries the N-acetylmethionine modification. A small GTPase-like region spans residues 39–279 (GVQYNMKIVI…IFLEMMEARS (241 aa)). GTP-binding positions include 50–57 (GDRNTGKT), 100–104 (DVVDK), and 177–179 (YRD). A disordered region spans residues 279–701 (SRGHASPLTT…LRGGGDYEAL (423 aa)). Over residues 284–315 (SPLTTSGQSPSSGSQSPVVPPSTVSTGSSSPS) the composition is skewed to low complexity. The span at 316–344 (TPQPVLQPPLQAPPAPPAPAEAPPLPAAP) shows a compositional bias: pro residues. Phosphoserine is present on residues Ser394, Ser416, Ser418, Ser461, and Ser462. Residues 495 to 506 (ALGPPRDAAPRA) are compositionally biased toward low complexity. Ser552 bears the Phosphoserine mark. The span at 555 to 569 (DAQRRAGEFPVREDL) shows a compositional bias: basic and acidic residues. Position 570 is a phosphoserine (Ser570). Thr573 carries the post-translational modification Phosphothreonine. The segment covering 580–589 (VQPPAPPKPL) has biased composition (pro residues). Over residues 608–626 (EPGREDSSEQDKEGRPPAK) the composition is skewed to basic and acidic residues. Phosphoserine occurs at positions 614 and 615. The interval 629 to 667 (KKKKKKGREEEDKAAKKRSKHKKSRERADDKGRDERRRR) is interaction with CDKN2A. Positions 643-653 (AKKRSKHKKSR) are enriched in basic residues. The segment covering 654 to 665 (ERADDKGRDERR) has biased composition (basic and acidic residues). Over residues 683–701 (LGGGAPSGPLRGGGDYEAL) the composition is skewed to gly residues.

It belongs to the small GTPase superfamily. Rab family.

The protein localises to the nucleus. Its subcellular location is the cytoplasm. In terms of biological role, may enhance cellular proliferation. May reduce growth inhibitory activity of CDKN2A. This chain is Rab-like protein 6 (RABL6), found in Bos taurus (Bovine).